We begin with the raw amino-acid sequence, 305 residues long: MELIFLGTSAGVPTRTRNVTAILLNLQHPTQSGLWLFDCGEGTQHQLLHTAFNPGKLDKIFISHLHGDHLFGLPGLLCSRSMSGIIQPLTIYGPQGIREFVETALRISGSWTDYPLEIVEIGAGEILDDGLRKVTAYPLEHPLECYGYRIEEHDKPGALNAQALKAAGVPPGPLFQELKAGKTITLEDGRQINGADYLAAPVPGKALAIFGDTGPCDAALDLAKGVDVMVHEATLDITMEAKANSRGHSSTRQAATLAREAGVGMLIITHVSSRYDDKGCQHLLRECRSIFPATELANDFTVFNV.

Zn(2+) is bound by residues His64, His66, Asp68, His69, His141, Asp212, and His270. The active-site Proton acceptor is Asp68.

The protein belongs to the RNase Z family. RNase BN subfamily. In terms of assembly, homodimer. Requires Zn(2+) as cofactor.

Zinc phosphodiesterase, which has both exoribonuclease and endoribonuclease activities. This Escherichia coli O139:H28 (strain E24377A / ETEC) protein is Ribonuclease BN.